Reading from the N-terminus, the 164-residue chain is MSSSVSSKTRYWVLALAAIVLDQWSKWAVLSSFQYRERVNVIPSFFDLTLVYNPGAAFSFLADQGGWQKYFFLVLAVAVSAYLVRAILRDEFAALGKIGAAMIIGGASGNVIDRLIHGHVVDFLLFYWQNWFYPAFNIADSFICVGAVLAVLDNIVHRKDSKKT.

Transmembrane regions (helical) follow at residues 11 to 31 (YWVLALAAIVLDQWSKWAVLS), 41 to 61 (VIPSFFDLTLVYNPGAAFSFL), 64 to 84 (QGGWQKYFFLVLAVAVSAYLV), and 92 to 112 (FAALGKIGAAMIIGGASGNVI). Active-site residues include Asp122 and Asp140. A helical transmembrane segment spans residues 132–152 (FYPAFNIADSFICVGAVLAVL).

The protein belongs to the peptidase A8 family.

The protein resides in the cell inner membrane. It catalyses the reaction Release of signal peptides from bacterial membrane prolipoproteins. Hydrolyzes -Xaa-Yaa-Zaa-|-(S,diacylglyceryl)Cys-, in which Xaa is hydrophobic (preferably Leu), and Yaa (Ala or Ser) and Zaa (Gly or Ala) have small, neutral side chains.. It functions in the pathway protein modification; lipoprotein biosynthesis (signal peptide cleavage). In terms of biological role, this protein specifically catalyzes the removal of signal peptides from prolipoproteins. The protein is Lipoprotein signal peptidase of Neisseria gonorrhoeae (strain ATCC 700825 / FA 1090).